We begin with the raw amino-acid sequence, 508 residues long: GTPase Obg (508 aa).

One can recognise an Obg domain in the interval Ala2–Met159. An OBG-type G domain is found at Ala160–Gln341. Residues Gly166–Ser173, Phe191–Gln195, Asp212–Gly215, Asn292–Asp295, and Ser322–Val324 each bind GTP. Residues Ser173 and Thr193 each coordinate Mg(2+). In terms of domain architecture, OCT spans Asp364–Pro444.

The protein belongs to the TRAFAC class OBG-HflX-like GTPase superfamily. OBG GTPase family. Monomer. The cofactor is Mg(2+).

Its subcellular location is the cytoplasm. An essential GTPase which binds GTP, GDP and possibly (p)ppGpp with moderate affinity, with high nucleotide exchange rates and a fairly low GTP hydrolysis rate. Plays a role in control of the cell cycle, stress response, ribosome biogenesis and in those bacteria that undergo differentiation, in morphogenesis control. This Corynebacterium diphtheriae (strain ATCC 700971 / NCTC 13129 / Biotype gravis) protein is GTPase Obg.